The primary structure comprises 356 residues: MNKKILISTGGSGGHVIPATIIYKHLEDNFDVSMTSDFRGVKFLNKDEYNLKIFNVRPISKNLLIIPLDFIFMIFLIFKSISFFRKNKIDTLISTGGYMSLPLCLGARILNIKLLLFEPNMVLGRSNKFFLSYCQKIFCYSNNIKKFPIKFKNKIKVIPALLRKNFYNKRDYNKSLDTINLLIIGGSQGAKIFDDLVKNAIIELAKNYKLKIYQQTNSINFESFKKIYEDKNIQCELFNFNDDVVNFMQKTDLCITRAGASTLAELNFTETPYLAIPLPTAKDNHQFENAHFYNKLGFNWLLNQKEIDEKTLLNKLINIIDNKEEYLVKKKNMKDFNYENTWNNINLKIISVINEN.

Residues 12–14 (SGG), asparagine 120, arginine 163, serine 187, and glutamine 286 each bind UDP-N-acetyl-alpha-D-glucosamine.

The protein belongs to the glycosyltransferase 28 family. MurG subfamily.

The protein resides in the cell inner membrane. The enzyme catalyses di-trans,octa-cis-undecaprenyl diphospho-N-acetyl-alpha-D-muramoyl-L-alanyl-D-glutamyl-meso-2,6-diaminopimeloyl-D-alanyl-D-alanine + UDP-N-acetyl-alpha-D-glucosamine = di-trans,octa-cis-undecaprenyl diphospho-[N-acetyl-alpha-D-glucosaminyl-(1-&gt;4)]-N-acetyl-alpha-D-muramoyl-L-alanyl-D-glutamyl-meso-2,6-diaminopimeloyl-D-alanyl-D-alanine + UDP + H(+). It participates in cell wall biogenesis; peptidoglycan biosynthesis. Functionally, cell wall formation. Catalyzes the transfer of a GlcNAc subunit on undecaprenyl-pyrophosphoryl-MurNAc-pentapeptide (lipid intermediate I) to form undecaprenyl-pyrophosphoryl-MurNAc-(pentapeptide)GlcNAc (lipid intermediate II). This is UDP-N-acetylglucosamine--N-acetylmuramyl-(pentapeptide) pyrophosphoryl-undecaprenol N-acetylglucosamine transferase from Pelagibacter ubique (strain HTCC1062).